The chain runs to 173 residues: Tumor necrosis factor ligand superfamily member 18 (173 aa).

The Cytoplasmic portion of the chain corresponds to Met1–Ser20. The chain crosses the membrane as a helical; Signal-anchor for type II membrane protein span at residues Trp21–Tyr41. The THD domain maps to Ile40–Met166. The Extracellular portion of the chain corresponds to Thr42–Ser173. Residues Cys52 and Cys72 are joined by a disulfide bond. An N-linked (GlcNAc...) asparagine glycan is attached at Asn74.

This sequence belongs to the tumor necrosis factor family. As to quaternary structure, homotrimer. Homodimer. Post-translationally, N-glycosylated. Detected in immature and mature dendritic cells and in macrophages (at protein level). Detected in spleen, lung, heart, thymus, monocytes, macrophages, B-cells and dendritic cells.

It is found in the cell membrane. Functionally, cytokine that binds to TNFRSF18/AITR/GITR. Regulates T-cell responses. Can function as costimulator and lower the threshold for T-cell activation and T-cell proliferation. Important for interactions between activated T-lymphocytes and endothelial cells. Mediates activation of NF-kappa-B. Triggers increased phosphorylation of STAT1 and up-regulates expression of VCAM1 and ICAM1. Promotes leukocyte adhesion to endothelial cells. Regulates migration of monocytes from the splenic reservoir to sites of inflammation. This chain is Tumor necrosis factor ligand superfamily member 18 (Tnfsf18), found in Mus musculus (Mouse).